The sequence spans 78 residues: UPF0291 protein SE_1024 (78 aa).

Residues 53–78 (TKVIDPEGNDVTPEKLKKIQEEKHNK) form a disordered region. The span at 64 to 78 (TPEKLKKIQEEKHNK) shows a compositional bias: basic and acidic residues.

It belongs to the UPF0291 family.

Its subcellular location is the cytoplasm. The protein is UPF0291 protein SE_1024 of Staphylococcus epidermidis (strain ATCC 12228 / FDA PCI 1200).